We begin with the raw amino-acid sequence, 238 residues long: MORN repeat-containing protein 3 (238 aa).

7 MORN repeats span residues 38–60, 62–84, 91–113, 114–136, 137–159, 160–182, and 184–205; these read YTGE…RRKS, YEGD…DSNT, YSGY…AKEY, YEGE…NGDI, YEGE…NENR, YEGS…NKGQ, and YEGV…GRTE.

It localises to the cytoplasmic vesicle. Its subcellular location is the secretory vesicle. The protein resides in the acrosome. In terms of biological role, assembles a suppression complex (suppresome) by tethering SIRT1 and MDM2 to regulate composite modifications of p53/TP53. Confers both deacetylation-mediated functional inactivation, by SIRT1, and ubiquitination-dependent degradation, by MDM2, of p53/TP53, promoting a proliferative and cell survival behaviors. May play a role in the regulation of spermatogenesis. This Xenopus laevis (African clawed frog) protein is MORN repeat-containing protein 3 (morn3).